Consider the following 440-residue polypeptide: VGFKAGVKDYRLTYYTPEYKTKDTDILAAFRMTPQPGVPAEEAGAAVAAESSTGTWTTVWTDGLTSLDRYKGRCYDIEPVAGEENQYIAYVAYPLDLFEEGSVTNMLTSIVGNVFGXKAXRALRLEDLRILPAYSKTFIGPPHGIQVERDKLNKYGRPLLGCTIKPKLGLCAKNYGRAVYECLRGGLDFTKDDENVNSQPSMRWRDRFLFVAEALFKAQAETGEVKGHYLNATAGTCEEMIKRATFARELGAPIVMHDYLTGGFTANTSLAFYCRDNGLLLHIHRAMHAVIDRQRNHGMHLRVLAKALRMSGGDHIHAGTVVGKLEGEREVTLGFVDLLRDDYIEKDRSRGIYFTQDWVSMPGVLPVASGGIHVWHMPALTEIFGDDSVLQFGGGTLGHPWGNAPGAVANRVALEACVQARNEGRDLAREGNEIIREASK.

Lysine 4 is modified (N6,N6,N6-trimethyllysine). Asparagine 113 and threonine 163 together coordinate substrate. The Proton acceptor role is filled by lysine 165. Lysine 167 is a binding site for substrate. Mg(2+)-binding residues include lysine 191, aspartate 193, and glutamate 194. Residue lysine 191 is modified to N6-carboxylysine. Histidine 284 functions as the Proton acceptor in the catalytic mechanism. Substrate-binding residues include arginine 285, histidine 317, and serine 369.

This sequence belongs to the RuBisCO large chain family. Type I subfamily. As to quaternary structure, heterohexadecamer of 8 large chains and 8 small chains; disulfide-linked. The disulfide link is formed within the large subunit homodimers. Requires Mg(2+) as cofactor. In terms of processing, the disulfide bond which can form in the large chain dimeric partners within the hexadecamer appears to be associated with oxidative stress and protein turnover.

The protein localises to the plastid. It is found in the chloroplast. It catalyses the reaction 2 (2R)-3-phosphoglycerate + 2 H(+) = D-ribulose 1,5-bisphosphate + CO2 + H2O. The enzyme catalyses D-ribulose 1,5-bisphosphate + O2 = 2-phosphoglycolate + (2R)-3-phosphoglycerate + 2 H(+). Its function is as follows. RuBisCO catalyzes two reactions: the carboxylation of D-ribulose 1,5-bisphosphate, the primary event in carbon dioxide fixation, as well as the oxidative fragmentation of the pentose substrate in the photorespiration process. Both reactions occur simultaneously and in competition at the same active site. This is Ribulose bisphosphate carboxylase large chain from Pteris vittata (Chinese ladder brake).